The sequence spans 146 residues: 3-hydroxyacyl-[acyl-carrier-protein] dehydratase FabZ (146 aa).

Residue H48 is part of the active site.

The protein belongs to the thioester dehydratase family. FabZ subfamily.

Its subcellular location is the cytoplasm. The enzyme catalyses a (3R)-hydroxyacyl-[ACP] = a (2E)-enoyl-[ACP] + H2O. Its function is as follows. Involved in unsaturated fatty acids biosynthesis. Catalyzes the dehydration of short chain beta-hydroxyacyl-ACPs and long chain saturated and unsaturated beta-hydroxyacyl-ACPs. This Campylobacter jejuni subsp. jejuni serotype O:6 (strain 81116 / NCTC 11828) protein is 3-hydroxyacyl-[acyl-carrier-protein] dehydratase FabZ.